Reading from the N-terminus, the 160-residue chain is S-adenosylmethionine decarboxylase proenzyme (160 aa).

The active-site Schiff-base intermediate with substrate; via pyruvic acid is the S73. S73 carries the pyruvic acid (Ser); by autocatalysis modification. The active-site Proton acceptor; for processing activity is the H78. The Proton donor; for catalytic activity role is filled by C93.

It belongs to the prokaryotic AdoMetDC family. Type 1 subfamily. In terms of assembly, heterotetramer of two alpha and two beta chains arranged as a dimer of alpha/beta heterodimers. Requires pyruvate as cofactor. Is synthesized initially as an inactive proenzyme. Formation of the active enzyme involves a self-maturation process in which the active site pyruvoyl group is generated from an internal serine residue via an autocatalytic post-translational modification. Two non-identical subunits are generated from the proenzyme in this reaction, and the pyruvate is formed at the N-terminus of the alpha chain, which is derived from the carboxyl end of the proenzyme. The post-translation cleavage follows an unusual pathway, termed non-hydrolytic serinolysis, in which the side chain hydroxyl group of the serine supplies its oxygen atom to form the C-terminus of the beta chain, while the remainder of the serine residue undergoes an oxidative deamination to produce ammonia and the pyruvoyl group blocking the N-terminus of the alpha chain.

The catalysed reaction is S-adenosyl-L-methionine + H(+) = S-adenosyl 3-(methylsulfanyl)propylamine + CO2. It participates in amine and polyamine biosynthesis; S-adenosylmethioninamine biosynthesis; S-adenosylmethioninamine from S-adenosyl-L-methionine: step 1/1. Catalyzes the decarboxylation of S-adenosylmethionine to S-adenosylmethioninamine (dcAdoMet), the propylamine donor required for the synthesis of the polyamines spermine and spermidine from the diamine putrescine. The sequence is that of S-adenosylmethionine decarboxylase proenzyme from Pseudomonas paraeruginosa (strain DSM 24068 / PA7) (Pseudomonas aeruginosa (strain PA7)).